The sequence spans 244 residues: Phosphoadenosine 5'-phosphosulfate reductase (244 aa).

Cysteine 239 (nucleophile; cysteine thiosulfonate intermediate) is an active-site residue.

It belongs to the PAPS reductase family. CysH subfamily.

Its subcellular location is the cytoplasm. It catalyses the reaction [thioredoxin]-disulfide + sulfite + adenosine 3',5'-bisphosphate + 2 H(+) = [thioredoxin]-dithiol + 3'-phosphoadenylyl sulfate. Its pathway is sulfur metabolism; hydrogen sulfide biosynthesis; sulfite from sulfate: step 3/3. Catalyzes the formation of sulfite from phosphoadenosine 5'-phosphosulfate (PAPS) using thioredoxin as an electron donor. This is Phosphoadenosine 5'-phosphosulfate reductase from Cronobacter sakazakii (strain ATCC BAA-894) (Enterobacter sakazakii).